A 152-amino-acid polypeptide reads, in one-letter code: Deoxyuridine 5'-triphosphate nucleotidohydrolase (152 aa).

Substrate is bound by residues 71–73 (RSG), Asn84, 88–90 (LID), and Met98.

It belongs to the dUTPase family. Mg(2+) is required as a cofactor.

It catalyses the reaction dUTP + H2O = dUMP + diphosphate + H(+). Its pathway is pyrimidine metabolism; dUMP biosynthesis; dUMP from dCTP (dUTP route): step 2/2. This enzyme is involved in nucleotide metabolism: it produces dUMP, the immediate precursor of thymidine nucleotides and it decreases the intracellular concentration of dUTP so that uracil cannot be incorporated into DNA. This Salmonella arizonae (strain ATCC BAA-731 / CDC346-86 / RSK2980) protein is Deoxyuridine 5'-triphosphate nucleotidohydrolase.